The primary structure comprises 325 residues: MDVFDYEDVQLIPNKCIVKSRSEIDTTVRFGSETFKIPVVPANMQTIIDEPLAIWLAENHYFYVMHRFQPEKRPAFIKMMHERNLFASISVGVKDDEFDFINQLAQDNLIPEYITIDIAHGHSQVVIDMIQHIKKVLPKSFVIAGNVGTPEAVRDLERAGADATKVGIGPGKVCITKIKTGFGTGGWQLGALRWCAKAATKPIIADGGIRTNGDIAKSIRFGANMVMIGSLFAGHTESPGELVEEDGQQFKEYFGSASEFQKGTHQNVEGKRILVPYKGSISDTLTEMRQDLQSSISYAGGKRLSALRKVDYVLVRHSIFNGDML.

C174 acts as the Thioimidate intermediate in catalysis. Position 203–226 (I203–V226) interacts with NADP(+).

The protein belongs to the IMPDH/GMPR family. GuaC type 2 subfamily.

The catalysed reaction is IMP + NH4(+) + NADP(+) = GMP + NADPH + 2 H(+). Its function is as follows. Catalyzes the irreversible NADPH-dependent deamination of GMP to IMP. It functions in the conversion of nucleobase, nucleoside and nucleotide derivatives of G to A nucleotides, and in maintaining the intracellular balance of A and G nucleotides. The chain is GMP reductase from Latilactobacillus sakei subsp. sakei (strain 23K) (Lactobacillus sakei subsp. sakei).